A 300-amino-acid polypeptide reads, in one-letter code: Cathepsin B-like CP2 (300 aa).

The first 19 residues, 1–19, serve as a signal peptide directing secretion; the sequence is MKLFLLAAAAFSAPALTVS. 3 cysteine pairs are disulfide-bonded: Cys88/Cys115, Cys98/Cys141, and Cys134/Cys177. Cys101 is an active-site residue. Residues His245 and Asn266 contribute to the active site.

The protein belongs to the peptidase C1 family.

It localises to the vacuole. Thiol protease which is required for parasite excystation and invasion of the proximal small intestine of the human host. This Giardia intestinalis (Giardia lamblia) protein is Cathepsin B-like CP2 (CP2).